We begin with the raw amino-acid sequence, 325 residues long: Formimidoylglutamase (325 aa).

Positions 130, 156, 158, 160, 244, and 246 each coordinate Mn(2+).

This sequence belongs to the arginase family. Mn(2+) is required as a cofactor.

The enzyme catalyses N-formimidoyl-L-glutamate + H2O = formamide + L-glutamate. It participates in amino-acid degradation; L-histidine degradation into L-glutamate; L-glutamate from N-formimidoyl-L-glutamate (hydrolase route): step 1/1. In terms of biological role, catalyzes the conversion of N-formimidoyl-L-glutamate to L-glutamate and formamide. The sequence is that of Formimidoylglutamase from Geobacillus sp. (strain WCH70).